Reading from the N-terminus, the 441-residue chain is Probable magnesium transporter NIPA8 (441 aa).

The Extracellular segment spans residues 1–4 (MGEW). Residues 5-25 (VIGAFINIFGSVAINFGTNLL) traverse the membrane as a helical segment. The Cytoplasmic portion of the chain corresponds to 26-56 (KLGHNERERLALQDGGGKMPLKPIIHNQTWR). Residues 57-77 (VGILVFLLGNCLNFISFGYAA) traverse the membrane as a helical segment. Residues 78–79 (QS) are Extracellular-facing. The chain crosses the membrane as a helical span at residues 80 to 100 (LLAALGSIQFVSNIAFAYVVL). The Cytoplasmic segment spans residues 101–105 (NKMVT). Residues 106–126 (VKVLVATAFIVLGNVFLVAFG) form a helical membrane-spanning segment. Residues 127–144 (NHQSPVFTPEQLAEKYSN) lie on the Extracellular side of the membrane. The chain crosses the membrane as a helical span at residues 145-165 (VTFLVYCGILILIVAVHHFLY). Over 166-184 (RKGEVLISTPGQEISSYWK) the chain is Cytoplasmic. A helical transmembrane segment spans residues 185–205 (MLLPFSYAVVSGAIGSCSVLF). The Extracellular segment spans residues 206-222 (AKSLSNLLRLAMSSSYQ). A helical membrane pass occupies residues 223-243 (LHSWFTYSMLLLFLSTAGFWM). Residues 244–255 (TRLNEGLSLYDA) are Cytoplasmic-facing. A helical transmembrane segment spans residues 256–276 (ILIVPMFQIAWTFFSICTGCI). The Extracellular segment spans residues 277-288 (YFQEFQVFDALR). The helical transmembrane segment at 289 to 309 (TTMFILGMMCVFIGISLLAPD) threads the bilayer. The Cytoplasmic segment spans residues 310–441 (DTRGNETKDN…MLEKTISSKA (132 aa)). The segment at 313 to 347 (GNETKDNSSSLDSIVSSSVPTEEDRLIPQSSEDGH) is disordered. The span at 320–330 (SSSLDSIVSSS) shows a compositional bias: low complexity. Over residues 334 to 347 (EEDRLIPQSSEDGH) the composition is skewed to basic and acidic residues.

It belongs to the NIPA (TC 2.A.7) family. Homodimer.

The protein localises to the cell membrane. It localises to the early endosome. In terms of biological role, acts as a Mg(2+) transporter. Can also transport other divalent cations such as Fe(2+), Sr(2+), Ba(2+), Mn(2+) and Co(2+) but to a much less extent than Mg(2+). This chain is Probable magnesium transporter NIPA8, found in Arabidopsis thaliana (Mouse-ear cress).